The following is a 215-amino-acid chain: Riboflavin synthase (215 aa).

2 Lumazine-binding repeats span residues 1–96 (MFTG…FGGH) and 97–193 (IVSG…EQFL). 2,4-dihydroxypteridine contacts are provided by residues 4–6 (GII), 47–49 (CLT), 61–66 (DVMSET), 100–102 (GHI), Lys-135, 144–146 (SLT), and 158–163 (SIIPHT).

Homotrimer.

The enzyme catalyses 2 6,7-dimethyl-8-(1-D-ribityl)lumazine + H(+) = 5-amino-6-(D-ribitylamino)uracil + riboflavin. It participates in cofactor biosynthesis; riboflavin biosynthesis; riboflavin from 2-hydroxy-3-oxobutyl phosphate and 5-amino-6-(D-ribitylamino)uracil: step 2/2. Catalyzes the dismutation of two molecules of 6,7-dimethyl-8-ribityllumazine, resulting in the formation of riboflavin and 5-amino-6-(D-ribitylamino)uracil. The protein is Riboflavin synthase (ribE) of Actinobacillus pleuropneumoniae (Haemophilus pleuropneumoniae).